The following is a 255-amino-acid chain: MLDKVKNVIIVLSGKGGVGKSTVSTQLALALRHSGHKVGLLDIDLCGPSVPFLLGLEGSNIYQCDEGWVPIYTDASKTLAVMSIGFLLKNRTDPVIWRGPKKTMMIRQFLTDVKWEELDYLIIDTPPGTSDEHITVMECMREVPCNGAIIVTTPQSVALDDVRKEITFCKKTGIKLLGIVEIFVCPNCTNCTNIFSSNGGVELAHLVQIPHLGTLPIDPRVGVLAGSTASVLDELPDSPTAQVLRGIVQHLVALT.

14–21 (GKGGVGKS) lines the ATP pocket. Residues Cys185 and Cys188 each coordinate [4Fe-4S] cluster.

This sequence belongs to the Mrp/NBP35 ATP-binding proteins family. NUBP2/CFD1 subfamily. As to quaternary structure, heterotetramer of 2 Nubp1 and 2 Nubp2 chains. [4Fe-4S] cluster serves as cofactor.

It is found in the cytoplasm. Component of the cytosolic iron-sulfur (Fe/S) protein assembly (CIA) machinery. Required for maturation of extramitochondrial Fe-S proteins. The Nubp1-Nubp2 heterotetramer forms a Fe-S scaffold complex, mediating the de novo assembly of an Fe-S cluster and its transfer to target apoproteins. This Drosophila persimilis (Fruit fly) protein is Cytosolic Fe-S cluster assembly factor Nubp2 homolog.